The following is a 220-amino-acid chain: Claudin-22 (220 aa).

Over 1 to 10 (MGLVFRTATQ) the chain is Cytoplasmic. Residues 11–31 (AAALLLSLLGWVLSCLTNYLP) traverse the membrane as a helical segment. Topologically, residues 32–81 (HWKNLNLELNEMENWTMGLWKSCVIQEEVGRQCKDFDSFLALPAELQVSR) are extracellular. The chain crosses the membrane as a helical span at residues 82 to 102 (VLMSLCNGLGLLGLLASGCGL). At 103–120 (DCLRLGETQEGLKKRLLT) the chain is on the cytoplasmic side. The chain crosses the membrane as a helical span at residues 121–141 (LGGTLLWTSGVMVLVPVSWVA). The Extracellular portion of the chain corresponds to 142-164 (HKTVREFWDETMPEIVPRWEFGE). Residues 165 to 185 (ALFLGWFAGFCLVLGGCVLHC) form a helical membrane-spanning segment. The Cytoplasmic segment spans residues 186–220 (AACWSPAPAASSHYAVAGPRDHQQHLELKQANPEI).

This sequence belongs to the claudin family.

The protein resides in the cell junction. It is found in the tight junction. Its subcellular location is the cell membrane. Its function is as follows. Plays a major role in tight junction-specific obliteration of the intercellular space, through calcium-independent cell-adhesion activity. This chain is Claudin-22 (Cldn22), found in Mus musculus (Mouse).